We begin with the raw amino-acid sequence, 509 residues long: 2,3-bisphosphoglycerate-independent phosphoglycerate mutase (509 aa).

Asp-12 and Ser-62 together coordinate Mn(2+). Ser-62 functions as the Phosphoserine intermediate in the catalytic mechanism. Substrate-binding positions include His-123, Arg-153–Asp-154, Arg-185, Arg-191, Arg-260–Arg-263, and Lys-333. Positions 400, 404, 441, 442, and 460 each coordinate Mn(2+).

It belongs to the BPG-independent phosphoglycerate mutase family. In terms of assembly, monomer. It depends on Mn(2+) as a cofactor.

The catalysed reaction is (2R)-2-phosphoglycerate = (2R)-3-phosphoglycerate. It functions in the pathway carbohydrate degradation; glycolysis; pyruvate from D-glyceraldehyde 3-phosphate: step 3/5. In terms of biological role, catalyzes the interconversion of 2-phosphoglycerate and 3-phosphoglycerate. This chain is 2,3-bisphosphoglycerate-independent phosphoglycerate mutase, found in Clostridium botulinum (strain Langeland / NCTC 10281 / Type F).